We begin with the raw amino-acid sequence, 334 residues long: Glycerol-3-phosphate dehydrogenase [NAD(P)+] 2 (334 aa).

NADPH-binding residues include tryptophan 16, arginine 36, arginine 37, and lysine 110. The sn-glycerol 3-phosphate site is built by lysine 110 and glycine 140. Residue alanine 144 coordinates NADPH. The sn-glycerol 3-phosphate site is built by lysine 195, aspartate 248, serine 258, arginine 259, and asparagine 260. Catalysis depends on lysine 195, which acts as the Proton acceptor. Arginine 259 contacts NADPH. Residues valine 282 and glutamate 284 each contribute to the NADPH site.

Belongs to the NAD-dependent glycerol-3-phosphate dehydrogenase family.

The protein localises to the cytoplasm. The enzyme catalyses sn-glycerol 3-phosphate + NAD(+) = dihydroxyacetone phosphate + NADH + H(+). It catalyses the reaction sn-glycerol 3-phosphate + NADP(+) = dihydroxyacetone phosphate + NADPH + H(+). It participates in membrane lipid metabolism; glycerophospholipid metabolism. Catalyzes the reduction of the glycolytic intermediate dihydroxyacetone phosphate (DHAP) to sn-glycerol 3-phosphate (G3P), the key precursor for phospholipid synthesis. This is Glycerol-3-phosphate dehydrogenase [NAD(P)+] 2 from Mycobacterium bovis (strain ATCC BAA-935 / AF2122/97).